The chain runs to 835 residues: MDASQADRKVAPVSAVVKNAICELSRINDGERLMEVLLSLKCYLGTRENSTQTQEHAEFNRNHYTPFLEFLVAQMGPQWLDLLTLEKLELWDSFFLEGPADQAFLVLMDSLGKTGPSIRLDRCVHVLERFLQRGALAEVIREVCQQQLESNPTAVLHEAILGRISSLPDHLANCLQQHNKPVFYPNNYYPLLAGSIISVLQMVSDALRDGKNCSISFASQVVGKVCMQGRQKELLSVLVPRLKSLVQSDCIWQRICWRLVESVPDRWMEPVVIGIVQMAPGAEFLSQLLGDLVVKNKRTQFLLTKKMLFLQYGLKKDALQSILGYLSLDASRRYLLVKILRELLEVWSSGSVLKNSSQPQLLHVSRCLLICLGLLNKQEIESCKQDLLVSLTSGARNYLDSSVPAIRRMGMVVAECLSHRIDTEGPGLSFQYEEDEDTRDLKALLKPPHVFEADSADCVKNPEESSPSKSCPKAIEKSKMEAKADQASDSELDSDDDLAPYDMSADTELKKSKAPAYIRDCIEVLLSDDVEKLEVTMTCLATLIQANTSATKEVSVELTKILLHIDDKPSVERFTELRHAALVAVAVTDPVPVSQYLTGEFYSLNYSLRQRMDILDVLSSAAQSLSEKLSHEVSSESRSTGTGQHSIRSTTWTLAEAPADWRKVVEERIASKTRRFSKGQSVPTPVPAPNRYHAVAGHLFFPLIQNYDRQIVTFDLLGEDRLVLGRMVHTLGILMHLALHAPIASQMGKALLEFVWVLRFHIDAFVRQGLLFCISTVLLSVPWERLMTDMAEEVMETQSWLADVAERDSDDDCRRLALNGLFLMEKLRNNIHGTP.

Disordered stretches follow at residues 455–501 (SADC…LAPY) and 629–648 (LSHEVSSESRSTGTGQHSIR). The segment covering 464 to 473 (ESSPSKSCPK) has biased composition (low complexity). A compositionally biased stretch (basic and acidic residues) spans 474–486 (AIEKSKMEAKADQ). Over residues 488–499 (SDSELDSDDDLA) the composition is skewed to acidic residues. A compositionally biased stretch (polar residues) spans 636–648 (ESRSTGTGQHSIR).

This sequence belongs to the TEL2 family.

It is found in the cytoplasm. Its subcellular location is the membrane. The protein localises to the nucleus. The protein resides in the chromosome. It localises to the telomere. Its function is as follows. Regulator of the DNA damage response (DDR). Part of the TTT complex that is required to stabilize protein levels of the phosphatidylinositol 3-kinase-related protein kinase (PIKK) family proteins. Promotes assembly, stabilizes and maintains the activity of TORC complexes, which regulate cell growth and survival in response to nutrient and hormonal signals. May be involved in telomere length regulation. In Xenopus laevis (African clawed frog), this protein is Telomere length regulation protein TEL2 homolog (telo2).